Consider the following 128-residue polypeptide: Cytochrome c-type biogenesis protein CcmE (128 aa).

At M1–R8 the chain is on the cytoplasmic side. The helical; Signal-anchor for type II membrane protein transmembrane segment at L9–N29 threads the bilayer. Residues L30–S128 lie on the Periplasmic side of the membrane. Residues H120 and Y124 each coordinate heme.

This sequence belongs to the CcmE/CycJ family.

It is found in the cell inner membrane. Heme chaperone required for the biogenesis of c-type cytochromes. Transiently binds heme delivered by CcmC and transfers the heme to apo-cytochromes in a process facilitated by CcmF and CcmH. The protein is Cytochrome c-type biogenesis protein CcmE of Rickettsia prowazekii (strain Madrid E).